Reading from the N-terminus, the 308-residue chain is Protoheme IX farnesyltransferase 2 (308 aa).

9 helical membrane-spanning segments follow: residues 20-40, 47-67, 92-114, 118-137, 144-164, 174-194, 218-238, 240-260, and 275-295; these read VTKPGIIMGNLIAVVGGFLLA, AVLMLATLVGLSLVVASGCAI, IPLKQVLGLGIALGVLGFGLLAW, LAALLFAAFGYLVYVGLYSL, VYGTLVGSLSGAVPPVVGYCA, LILLAMFSLWQMPHSYAIAIF, LHIVFYIALFALVSTLLPLAG, TGVGFMAVSCVTSFWWLLMAL, and QVFGFSILTIAILSLTMALDF.

This sequence belongs to the UbiA prenyltransferase family. Protoheme IX farnesyltransferase subfamily.

The protein resides in the cell inner membrane. The enzyme catalyses heme b + (2E,6E)-farnesyl diphosphate + H2O = Fe(II)-heme o + diphosphate. The protein operates within porphyrin-containing compound metabolism; heme O biosynthesis; heme O from protoheme: step 1/1. Its function is as follows. Converts heme B (protoheme IX) to heme O by substitution of the vinyl group on carbon 2 of heme B porphyrin ring with a hydroxyethyl farnesyl side group. This Shewanella loihica (strain ATCC BAA-1088 / PV-4) protein is Protoheme IX farnesyltransferase 2.